A 253-amino-acid polypeptide reads, in one-letter code: Imidazole glycerol phosphate synthase subunit HisF (253 aa).

Active-site residues include D11 and D130.

Belongs to the HisA/HisF family. Heterodimer of HisH and HisF.

The protein resides in the cytoplasm. The enzyme catalyses 5-[(5-phospho-1-deoxy-D-ribulos-1-ylimino)methylamino]-1-(5-phospho-beta-D-ribosyl)imidazole-4-carboxamide + L-glutamine = D-erythro-1-(imidazol-4-yl)glycerol 3-phosphate + 5-amino-1-(5-phospho-beta-D-ribosyl)imidazole-4-carboxamide + L-glutamate + H(+). The protein operates within amino-acid biosynthesis; L-histidine biosynthesis; L-histidine from 5-phospho-alpha-D-ribose 1-diphosphate: step 5/9. Functionally, IGPS catalyzes the conversion of PRFAR and glutamine to IGP, AICAR and glutamate. The HisF subunit catalyzes the cyclization activity that produces IGP and AICAR from PRFAR using the ammonia provided by the HisH subunit. The polypeptide is Imidazole glycerol phosphate synthase subunit HisF (Clostridium botulinum (strain Langeland / NCTC 10281 / Type F)).